The chain runs to 247 residues: Mast cell protease 8 (247 aa).

The first 19 residues, 1–19 (MFLLLVLLVAALPVNAEGG), serve as a signal peptide directing secretion. Position 20 (glutamate 20) is a propeptide, activation peptide. The region spanning 21–242 (IIWGTESKPH…FMPWIRKTMK (222 aa)) is the Peptidase S1 domain. N-linked (GlcNAc...) asparagine glycosylation is present at asparagine 41. A disulfide bridge connects residues cysteine 49 and cysteine 65. The Charge relay system role is filled by histidine 64. Residues asparagine 71 and asparagine 101 are each glycosylated (N-linked (GlcNAc...) asparagine). The Charge relay system role is filled by aspartate 107. 2 cysteine pairs are disulfide-bonded: cysteine 141/cysteine 206 and cysteine 171/cysteine 185. Residues asparagine 151 and asparagine 179 are each glycosylated (N-linked (GlcNAc...) asparagine). The active-site Charge relay system is serine 200.

The protein belongs to the peptidase S1 family. Granzyme subfamily.

Its subcellular location is the secreted. It localises to the cytoplasmic granule. This is Mast cell protease 8 (Mcpt8) from Mus musculus (Mouse).